A 37-amino-acid chain; its full sequence is Cytochrome b6-f complex subunit 5 (37 aa).

The chain crosses the membrane as a helical span at residues 5-25 (LLCGIVLGLIPITLMGLFVAA).

The protein belongs to the PetG family. In terms of assembly, the 4 large subunits of the cytochrome b6-f complex are cytochrome b6, subunit IV (17 kDa polypeptide, PetD), cytochrome f and the Rieske protein, while the 4 small subunits are PetG, PetL, PetM and PetN. The complex functions as a dimer.

It localises to the cellular thylakoid membrane. Its function is as follows. Component of the cytochrome b6-f complex, which mediates electron transfer between photosystem II (PSII) and photosystem I (PSI), cyclic electron flow around PSI, and state transitions. PetG is required for either the stability or assembly of the cytochrome b6-f complex. The protein is Cytochrome b6-f complex subunit 5 of Synechococcus sp. (strain CC9311).